The primary structure comprises 309 residues: Porphobilinogen deaminase (309 aa).

The residue at position 242 (Cys-242) is an S-(dipyrrolylmethanemethyl)cysteine.

Belongs to the HMBS family. Monomer. Dipyrromethane is required as a cofactor.

It catalyses the reaction 4 porphobilinogen + H2O = hydroxymethylbilane + 4 NH4(+). It participates in porphyrin-containing compound metabolism; protoporphyrin-IX biosynthesis; coproporphyrinogen-III from 5-aminolevulinate: step 2/4. Its function is as follows. Tetrapolymerization of the monopyrrole PBG into the hydroxymethylbilane pre-uroporphyrinogen in several discrete steps. The polypeptide is Porphobilinogen deaminase (Legionella pneumophila (strain Lens)).